The chain runs to 253 residues: Protein C1orf43 homolog (253 aa).

Residues 11–31 (VNVVLVMAYGSLVFVLLFIFV) traverse the membrane as a helical segment. The interval 194–213 (SGSSQRQHQSAAKDLTQSPE) is disordered.

The protein localises to the membrane. The protein resides in the golgi apparatus. It localises to the mitochondrion. Its function is as follows. General regulator of phagocytosis. Required to uptake Gram negative bacterium by macrophages. In Bos taurus (Bovine), this protein is Protein C1orf43 homolog.